Consider the following 202-residue polypeptide: Large ribosomal subunit protein uL4 (202 aa).

The interval 40 to 71 (GRQGSKAQKTRSQVSGGGKKPWRQKGSGRARA) is disordered. Over residues 44-53 (SKAQKTRSQV) the composition is skewed to polar residues.

It belongs to the universal ribosomal protein uL4 family. As to quaternary structure, part of the 50S ribosomal subunit.

One of the primary rRNA binding proteins, this protein initially binds near the 5'-end of the 23S rRNA. It is important during the early stages of 50S assembly. It makes multiple contacts with different domains of the 23S rRNA in the assembled 50S subunit and ribosome. Functionally, forms part of the polypeptide exit tunnel. This Hahella chejuensis (strain KCTC 2396) protein is Large ribosomal subunit protein uL4.